The chain runs to 213 residues: Urease accessory protein UreE (213 aa).

The segment at 170–213 (EHHGHSHSHSHSHSHDHDHDHDHDHDHDHQHGPSCSHGHHHGHR) is disordered. Positions 182–200 (HSHDHDHDHDHDHDHDHQH) are enriched in basic and acidic residues.

It belongs to the UreE family.

The protein localises to the cytoplasm. Involved in urease metallocenter assembly. Binds nickel. Probably functions as a nickel donor during metallocenter assembly. This chain is Urease accessory protein UreE, found in Burkholderia mallei (strain NCTC 10229).